Here is a 450-residue protein sequence, read N- to C-terminus: tRNA modification GTPase MnmE (450 aa).

Residues Arg23, Glu79, and Lys118 each contribute to the (6S)-5-formyl-5,6,7,8-tetrahydrofolate site. One can recognise a TrmE-type G domain in the interval 214 to 374; that stretch reads GITLILVGKP…LKEHILNKVG (161 aa). Asn224 contributes to the K(+) binding site. GTP-binding positions include 224 to 229, 243 to 249, and 268 to 271; these read NAGKSS, TSIAGTT, and DTAG. Mg(2+) is bound at residue Ser228. K(+)-binding residues include Thr243, Ile245, and Thr248. Thr249 contacts Mg(2+). Lys450 contributes to the (6S)-5-formyl-5,6,7,8-tetrahydrofolate binding site.

This sequence belongs to the TRAFAC class TrmE-Era-EngA-EngB-Septin-like GTPase superfamily. TrmE GTPase family. As to quaternary structure, homodimer. Heterotetramer of two MnmE and two MnmG subunits. K(+) serves as cofactor.

Its subcellular location is the cytoplasm. Its function is as follows. Exhibits a very high intrinsic GTPase hydrolysis rate. Involved in the addition of a carboxymethylaminomethyl (cmnm) group at the wobble position (U34) of certain tRNAs, forming tRNA-cmnm(5)s(2)U34. The polypeptide is tRNA modification GTPase MnmE (Francisella tularensis subsp. holarctica (strain FTNF002-00 / FTA)).